We begin with the raw amino-acid sequence, 602 residues long: Elongation factor 4 (602 aa).

The tr-type G domain occupies 7 to 189 (RKIRNFSIIA…AIVKNIPPPT (183 aa)). Residues 19 to 24 (DHGKST) and 136 to 139 (NKID) contribute to the GTP site.

It belongs to the TRAFAC class translation factor GTPase superfamily. Classic translation factor GTPase family. LepA subfamily.

Its subcellular location is the cell membrane. The catalysed reaction is GTP + H2O = GDP + phosphate + H(+). In terms of biological role, required for accurate and efficient protein synthesis under certain stress conditions. May act as a fidelity factor of the translation reaction, by catalyzing a one-codon backward translocation of tRNAs on improperly translocated ribosomes. Back-translocation proceeds from a post-translocation (POST) complex to a pre-translocation (PRE) complex, thus giving elongation factor G a second chance to translocate the tRNAs correctly. Binds to ribosomes in a GTP-dependent manner. This Alkaliphilus metalliredigens (strain QYMF) protein is Elongation factor 4.